A 387-amino-acid polypeptide reads, in one-letter code: ATP phosphoribosyltransferase regulatory subunit (387 aa).

The protein belongs to the class-II aminoacyl-tRNA synthetase family. HisZ subfamily. As to quaternary structure, heteromultimer composed of HisG and HisZ subunits.

It is found in the cytoplasm. Its pathway is amino-acid biosynthesis; L-histidine biosynthesis; L-histidine from 5-phospho-alpha-D-ribose 1-diphosphate: step 1/9. Functionally, required for the first step of histidine biosynthesis. May allow the feedback regulation of ATP phosphoribosyltransferase activity by histidine. This Psychrobacter arcticus (strain DSM 17307 / VKM B-2377 / 273-4) protein is ATP phosphoribosyltransferase regulatory subunit.